Reading from the N-terminus, the 314-residue chain is Glucocorticoid receptor (314 aa).

The tract at residues 1–44 (ASAAVSAAPTEKEFPKTHSDVSSEQQNLKGQKGSNGGSMKLHTT) is disordered. Residues 1 to 281 (ASAAVSAAPT…SAATGPPPKL (281 aa)) are modulating. Over residues 10-21 (TEKEFPKTHSDV) the composition is skewed to basic and acidic residues. Phosphoserine is present on residues Ser-65, Ser-73, and Ser-88. Residue Lys-120 forms a Glycyl lysine isopeptide (Lys-Gly) (interchain with G-Cter in SUMO2) linkage. Residue Ser-129 is modified to Phosphoserine. Residues Lys-139 and Lys-155 each participate in a glycyl lysine isopeptide (Lys-Gly) (interchain with G-Cter in SUMO); alternate cross-link. Residues Lys-139 and Lys-155 each participate in a glycyl lysine isopeptide (Lys-Gly) (interchain with G-Cter in SUMO2); alternate cross-link. Ser-266 bears the Phosphoserine mark. A Glycyl lysine isopeptide (Lys-Gly) (interchain with G-Cter in ubiquitin) cross-link involves residue Lys-280. The segment at 282 to 314 (CLVCSDEASGCHYGVLTCGSCKVFFKRAVEGQH) adopts an NR C4-type zinc-finger fold. The segment at residues 282–314 (CLVCSDEASGCHYGVLTCGSCKVFFKRAVEGQH) is a DNA-binding region (nuclear receptor).

It belongs to the nuclear hormone receptor family. NR3 subfamily. As to quaternary structure, heteromultimeric cytoplasmic complex with HSP90AA1, HSPA1A/HSPA1B, and FKBP5 or another immunophilin such as PPID, STIP1, or the immunophilin homolog PPP5C. Upon ligand binding FKBP5 dissociates from the complex and FKBP4 takes its place, thereby linking the complex to dynein and mediating transport to the nucleus, where the complex dissociates. Probably forms a complex composed of chaperones HSP90 and HSP70, co-chaperones CDC37, PPP5C, TSC1 and client protein TSC2, CDK4, AKT, RAF1 and NR3C1; this complex does not contain co-chaperones STIP1/HOP and PTGES3/p23. Directly interacts with UNC45A. Binds to DNA as a homodimer, and as heterodimer with NR3C2 or the retinoid X receptor. Binds STAT5A and STAT5B homodimers and heterodimers. Interacts with NRIP1, POU2F1, POU2F2 and TRIM28. Interacts with several coactivator complexes, including the SMARCA4 complex, CREBBP/EP300, TADA2L (Ada complex) and p160 coactivators such as NCOA2 and NCOA6. Interaction with BAG1 inhibits transactivation. Interacts with HEXIM1 and TGFB1I1. Interacts with NCOA1. Interacts with NCOA3, SMARCA4, SMARCC1, SMARCD1, and SMARCE1. Interacts with CLOCK, CRY1 and CRY2 in a ligand-dependent fashion. Interacts with CIART. Interacts with RWDD3. Interacts with UBE2I/UBC9 and this interaction is enhanced in the presence of RWDD3. Interacts with GRIP1. Interacts with NR4A3 (via nuclear receptor DNA-binding domain), represses transcription activity of NR4A3 on the POMC promoter Nur response element (NurRE). Directly interacts with PNRC2 to attract and form a complex with UPF1 and DCP1A; the interaction leads to rapid mRNA degradation. Interacts with GSK3B. Interacts with FNIP1 and FNIP2. Interacts (via C-terminus) with HNRNPU (via C-terminus). Interacts with MCM3AP. Interacts (via domain NR LBD) with HSP90AA1 and HSP90AB1. In the absence of hormonal ligand, interacts with TACC1. Interacts (via NR LBD domain) with ZNF764 (via KRAB domain); the interaction regulates transcription factor activity of NR3C1 by directing its actions toward certain biologic pathways. In terms of processing, acetylation by CLOCK reduces its binding to glucocorticoid response elements and its transcriptional activity. Post-translationally, increased proteasome-mediated degradation in response to glucocorticoids. Phosphorylated in the absence of hormone; becomes hyperphosphorylated in the presence of glucocorticoid. The Ser-65, Ser-88 and Ser-266-phosphorylated forms are mainly cytoplasmic, and the Ser-73-phosphorylated form is nuclear. Phosphorylation at Ser-73 increases transcriptional activity. Phosphorylation at Ser-65, Ser-88 and Ser-266 decreases signaling capacity. Phosphorylation at Ser-266 may protect from glucocorticoid-induced apoptosis. Phosphorylation at Ser-65 and Ser-73 is not required in regulation of chromosome segregation. May be dephosphorylated by PPP5C, attenuates NR3C1 action. In terms of processing, ubiquitinated by UBR5, leading to its degradation: UBR5 specifically recognizes and binds ligand-bound NR3C1 when it is not associated with coactivators (NCOAs). In presence of NCOAs, the UBR5-degron is not accessible, preventing its ubiquitination and degradation. Post-translationally, sumoylation at Lys-139 and Lys-155 negatively regulates its transcriptional activity. Heat shock increases sumoylation in a RWDD3-dependent manner.

The protein resides in the cytoplasm. The protein localises to the nucleus. It is found in the mitochondrion. It localises to the cytoskeleton. Its subcellular location is the spindle. The protein resides in the microtubule organizing center. The protein localises to the centrosome. It is found in the chromosome. It localises to the nucleoplasm. Its function is as follows. Receptor for glucocorticoids (GC). Has a dual mode of action: as a transcription factor that binds to glucocorticoid response elements (GRE), both for nuclear and mitochondrial DNA, and as a modulator of other transcription factors. Affects inflammatory responses, cellular proliferation and differentiation in target tissues. Involved in chromatin remodeling. Plays a role in rapid mRNA degradation by binding to the 5' UTR of target mRNAs and interacting with PNRC2 in a ligand-dependent manner which recruits the RNA helicase UPF1 and the mRNA-decapping enzyme DCP1A, leading to RNA decay. Could act as a coactivator for STAT5-dependent transcription upon growth hormone (GH) stimulation and could reveal an essential role of hepatic GR in the control of body growth. Mediates glucocorticoid-induced apoptosis. Promotes accurate chromosome segregation during mitosis. May act as a tumor suppressor. May play a negative role in adipogenesis through the regulation of lipolytic and antilipogenic gene expression. In Ovis aries (Sheep), this protein is Glucocorticoid receptor (NR3C1).